A 94-amino-acid polypeptide reads, in one-letter code: Co-chaperonin GroES (94 aa).

The protein belongs to the GroES chaperonin family. As to quaternary structure, heptamer of 7 subunits arranged in a ring. Interacts with the chaperonin GroEL.

The protein resides in the cytoplasm. Together with the chaperonin GroEL, plays an essential role in assisting protein folding. The GroEL-GroES system forms a nano-cage that allows encapsulation of the non-native substrate proteins and provides a physical environment optimized to promote and accelerate protein folding. GroES binds to the apical surface of the GroEL ring, thereby capping the opening of the GroEL channel. This chain is Co-chaperonin GroES, found in Heliobacterium modesticaldum (strain ATCC 51547 / Ice1).